The sequence spans 310 residues: Ribosomal protein uL3 glutamine methyltransferase (310 aa).

Belongs to the protein N5-glutamine methyltransferase family. PrmB subfamily.

It carries out the reaction L-glutaminyl-[ribosomal protein uL3] + S-adenosyl-L-methionine = N(5)-methyl-L-glutaminyl-[ribosomal protein uL3] + S-adenosyl-L-homocysteine + H(+). In terms of biological role, methylates large ribosomal subunit protein uL3 on a specific glutamine residue. This chain is Ribosomal protein uL3 glutamine methyltransferase, found in Yersinia pestis.